A 95-amino-acid polypeptide reads, in one-letter code: Aspartyl/glutamyl-tRNA(Asn/Gln) amidotransferase subunit C (95 aa).

It belongs to the GatC family. As to quaternary structure, heterotrimer of A, B and C subunits.

It catalyses the reaction L-glutamyl-tRNA(Gln) + L-glutamine + ATP + H2O = L-glutaminyl-tRNA(Gln) + L-glutamate + ADP + phosphate + H(+). The enzyme catalyses L-aspartyl-tRNA(Asn) + L-glutamine + ATP + H2O = L-asparaginyl-tRNA(Asn) + L-glutamate + ADP + phosphate + 2 H(+). Functionally, allows the formation of correctly charged Asn-tRNA(Asn) or Gln-tRNA(Gln) through the transamidation of misacylated Asp-tRNA(Asn) or Glu-tRNA(Gln) in organisms which lack either or both of asparaginyl-tRNA or glutaminyl-tRNA synthetases. The reaction takes place in the presence of glutamine and ATP through an activated phospho-Asp-tRNA(Asn) or phospho-Glu-tRNA(Gln). This Nitrobacter winogradskyi (strain ATCC 25391 / DSM 10237 / CIP 104748 / NCIMB 11846 / Nb-255) protein is Aspartyl/glutamyl-tRNA(Asn/Gln) amidotransferase subunit C.